Here is a 449-residue protein sequence, read N- to C-terminus: Ribosomal protein uS12 methylthiotransferase RimO (449 aa).

Positions 7-123 constitute an MTTase N-terminal domain; that stretch reads QKVSMVSLGC…VAEILAEHHA (117 aa). Positions 16, 52, 86, 161, 165, and 168 each coordinate [4Fe-4S] cluster. In terms of domain architecture, Radical SAM core spans 147-377; sequence SSPGWYAYLK…MKTQARVSFR (231 aa). The region spanning 380–448 is the TRAM domain; that stretch reads RAMVGQTEQV…DYDLVAEMIE (69 aa).

This sequence belongs to the methylthiotransferase family. RimO subfamily. [4Fe-4S] cluster serves as cofactor.

The protein localises to the cytoplasm. It carries out the reaction L-aspartate(89)-[ribosomal protein uS12]-hydrogen + (sulfur carrier)-SH + AH2 + 2 S-adenosyl-L-methionine = 3-methylsulfanyl-L-aspartate(89)-[ribosomal protein uS12]-hydrogen + (sulfur carrier)-H + 5'-deoxyadenosine + L-methionine + A + S-adenosyl-L-homocysteine + 2 H(+). Catalyzes the methylthiolation of an aspartic acid residue of ribosomal protein uS12. This chain is Ribosomal protein uS12 methylthiotransferase RimO, found in Trichlorobacter lovleyi (strain ATCC BAA-1151 / DSM 17278 / SZ) (Geobacter lovleyi).